The following is a 280-amino-acid chain: Pyridoxal 5'-phosphate synthase subunit PdxS (280 aa).

D12 serves as a coordination point for D-ribose 5-phosphate. The Schiff-base intermediate with D-ribose 5-phosphate role is filled by K69. G141 is a D-ribose 5-phosphate binding site. D-glyceraldehyde 3-phosphate is bound at residue R153. Residues G202 and 223-224 contribute to the D-ribose 5-phosphate site; that span reads GS.

It belongs to the PdxS/SNZ family. In the presence of PdxT, forms a dodecamer of heterodimers.

It catalyses the reaction aldehydo-D-ribose 5-phosphate + D-glyceraldehyde 3-phosphate + L-glutamine = pyridoxal 5'-phosphate + L-glutamate + phosphate + 3 H2O + H(+). It participates in cofactor biosynthesis; pyridoxal 5'-phosphate biosynthesis. Functionally, catalyzes the formation of pyridoxal 5'-phosphate from ribose 5-phosphate (RBP), glyceraldehyde 3-phosphate (G3P) and ammonia. The ammonia is provided by the PdxT subunit. Can also use ribulose 5-phosphate and dihydroxyacetone phosphate as substrates, resulting from enzyme-catalyzed isomerization of RBP and G3P, respectively. The chain is Pyridoxal 5'-phosphate synthase subunit PdxS from Fusobacterium nucleatum subsp. nucleatum (strain ATCC 25586 / DSM 15643 / BCRC 10681 / CIP 101130 / JCM 8532 / KCTC 2640 / LMG 13131 / VPI 4355).